The following is a 363-amino-acid chain: UDP-N-acetylglucosamine--N-acetylmuramyl-(pentapeptide) pyrophosphoryl-undecaprenol N-acetylglucosamine transferase (363 aa).

Residues 10-12 (TGG), N124, S195, I249, and Q294 each bind UDP-N-acetyl-alpha-D-glucosamine.

It belongs to the glycosyltransferase 28 family. MurG subfamily.

It is found in the cell membrane. The catalysed reaction is Mur2Ac(oyl-L-Ala-gamma-D-Glu-L-Lys-D-Ala-D-Ala)-di-trans,octa-cis-undecaprenyl diphosphate + UDP-N-acetyl-alpha-D-glucosamine = beta-D-GlcNAc-(1-&gt;4)-Mur2Ac(oyl-L-Ala-gamma-D-Glu-L-Lys-D-Ala-D-Ala)-di-trans,octa-cis-undecaprenyl diphosphate + UDP + H(+). The protein operates within cell wall biogenesis; peptidoglycan biosynthesis. In terms of biological role, cell wall formation. Catalyzes the transfer of a GlcNAc subunit on undecaprenyl-pyrophosphoryl-MurNAc-pentapeptide (lipid intermediate I) to form undecaprenyl-pyrophosphoryl-MurNAc-(pentapeptide)GlcNAc (lipid intermediate II). The polypeptide is UDP-N-acetylglucosamine--N-acetylmuramyl-(pentapeptide) pyrophosphoryl-undecaprenol N-acetylglucosamine transferase (Leuconostoc mesenteroides subsp. mesenteroides (strain ATCC 8293 / DSM 20343 / BCRC 11652 / CCM 1803 / JCM 6124 / NCDO 523 / NBRC 100496 / NCIMB 8023 / NCTC 12954 / NRRL B-1118 / 37Y)).